Reading from the N-terminus, the 300-residue chain is HTH-type transcriptional regulator ArgP (300 aa).

The HTH lysR-type domain occupies 4-60 (PDYRTLQALDAVIRERGFERAAQKLCITQSAVSQRIKQLENLFGQPLLVRTVPPRPT). Positions 21-40 (FERAAQKLCITQSAVSQRIK) form a DNA-binding region, H-T-H motif.

The protein belongs to the LysR transcriptional regulatory family. Homodimer.

Controls the transcription of genes involved in arginine and lysine metabolism. The chain is HTH-type transcriptional regulator ArgP from Photorhabdus laumondii subsp. laumondii (strain DSM 15139 / CIP 105565 / TT01) (Photorhabdus luminescens subsp. laumondii).